The sequence spans 245 residues: 8-amino-3,8-dideoxy-manno-octulosonate cytidylyltransferase (245 aa).

It belongs to the KdsB family.

The protein localises to the cytoplasm. It carries out the reaction 8-amino-3,8-dideoxy-alpha-D-manno-octulosonate + CTP = CMP-8-amino-3,8-dideoxy-alpha-D-manno-oct-2-ulosonate + diphosphate. The protein operates within bacterial outer membrane biogenesis; lipopolysaccharide biosynthesis. Its function is as follows. Activates KDO8N (a required 8-carbon sugar) for incorporation into bacterial lipopolysaccharide in the Shewanella genus. This chain is 8-amino-3,8-dideoxy-manno-octulosonate cytidylyltransferase, found in Shewanella sediminis (strain HAW-EB3).